We begin with the raw amino-acid sequence, 384 residues long: Signal peptide peptidase-like 3 (384 aa).

Over 1-8 (MAEQTYSW) the chain is Lumenal. The helical transmembrane segment at 9 to 29 (AYSLVDSSQVSTFLISILLIV) threads the bilayer. At 30–73 (YGSFRSLNMDFENQDKEKDSNSSSGSFNGNSTNNSIQTIDSTQA) the chain is on the cytoplasmic side. The chain crosses the membrane as a helical span at residues 74-94 (LFLPIGASVSLLVMFFFFDSV). A topological domain (lumenal) is located at residue Gln95. Residues 96–116 (VVFTICTAVLATIAFAFLLLP) traverse the membrane as a helical segment. The Cytoplasmic portion of the chain corresponds to 117-138 (MCQYLTRPCSPQNKISFGCCGR). The chain crosses the membrane as a helical span at residues 139–159 (FTAAELLSFSLSVMLVLIWVL). Residues 160-164 (TGHWL) are Lumenal-facing. Residues 165–185 (LMDALAMGLCVAMIAFVRLPS) form a helical membrane-spanning segment. Topologically, residues 186–190 (LKVSC) are cytoplasmic. Residues 191–211 (LLLSGLLIYDVFWVFFSAYIF) traverse the membrane as a helical segment. Residue Asp200 is part of the active site. Over 212 to 262 (NSNVMVKVATQPADNPLDVLSRKLHLGPNVGRDVPRLSLPGKLVFPSSTGS) the chain is Lumenal. Residues 263–283 (HFSMLGIGDIVMPGLLLCFVL) form a helical membrane-spanning segment. The active site involves Asp271. At 284-311 (RYDNYKKQASGDSCGAPGPANISGRMQK) the chain is on the cytoplasmic side. The chain crosses the membrane as a helical span at residues 312–332 (VSYFHCTLIGYFVGLLTATVA). Residues 333–339 (SRIHRAA) are Lumenal-facing. Residues 340–360 (QPALLYLVPFTLLPLLTMAYL) form a helical membrane-spanning segment. The PAL motif lies at 341–343 (PAL). Topologically, residues 361-384 (KGDLRRMWSEPFHSKSSSSRFLEV) are cytoplasmic.

The protein belongs to the peptidase A22B family. Monomer. Homodimer. Interacts with STIM1 (via transmembrane region and SOAR/CAD domain); the interaction promotes the binding of STIM1 to ORAI1. In terms of processing, not glycosylated.

The protein localises to the endoplasmic reticulum membrane. It localises to the golgi apparatus. Its subcellular location is the membrane. With respect to regulation, its proteolytic activity is blocked by a signal peptide peptidase (SPP) inhibitor, (ZLL)2-ketone (ZLL) or a gamma-secretase inhibitor, LY411,575. Functionally, intramembrane-cleaving aspartic protease (I-CLiP) that cleaves type II membrane protein substrates in or close to their luminal transmembrane domain boundaries. Acts like a sheddase by mediating the proteolytic release and secretion of active site-containing ectodomains of glycan-modifiying glycosidase and glycosyltransferase enzymes such as MGAT5, B4GAT1 and B4GALT1. Plays a role in the regulation of cellular glycosylation processes. Required to link T-cell antigen receptor (TCR) and calcineurin-NFAT signaling cascades in lymphocytes by promoting the association of STIM1 and ORAI1 during store-operated calcium entry (SOCE) in a protease-independent manner. This chain is Signal peptide peptidase-like 3, found in Mus musculus (Mouse).